The chain runs to 614 residues: Methionine--tRNA ligase (614 aa).

Positions 11–21 (PYTNGPRHIGH) match the 'HIGH' region motif. Residues Cys143, Cys146, Cys156, and Cys159 each contribute to the Zn(2+) site. Residues 359–363 (QFSTS) carry the 'KMSKS' region motif. Thr362 is an ATP binding site.

This sequence belongs to the class-I aminoacyl-tRNA synthetase family. MetG type 1 subfamily. As to quaternary structure, monomer. Zn(2+) serves as cofactor.

It localises to the cytoplasm. It catalyses the reaction tRNA(Met) + L-methionine + ATP = L-methionyl-tRNA(Met) + AMP + diphosphate. Its function is as follows. Is required not only for elongation of protein synthesis but also for the initiation of all mRNA translation through initiator tRNA(fMet) aminoacylation. This chain is Methionine--tRNA ligase, found in Beutenbergia cavernae (strain ATCC BAA-8 / DSM 12333 / CCUG 43141 / JCM 11478 / NBRC 16432 / NCIMB 13614 / HKI 0122).